The following is a 173-amino-acid chain: MLDRRGSYEYEDLLACGRGELFGPGNAQLPLPPMLMFDRIVEISETGGEFGKGVVRAELDVKPDLWFFGCHFKNDPVMPGCLGLDAMWQMVGFFLGWTGGAGRGRALGLGDLKFSGQVLPTASKVVYNVDIKRVMRSKLVLGIADGWLSMDGDIIYRAKDLKVGLFKQGAAPS.

Histidine 71 is an active-site residue.

The protein belongs to the thioester dehydratase family. FabA subfamily. In terms of assembly, homodimer.

It localises to the cytoplasm. It catalyses the reaction a (3R)-hydroxyacyl-[ACP] = a (2E)-enoyl-[ACP] + H2O. It carries out the reaction (3R)-hydroxydecanoyl-[ACP] = (2E)-decenoyl-[ACP] + H2O. The enzyme catalyses (2E)-decenoyl-[ACP] = (3Z)-decenoyl-[ACP]. It participates in lipid metabolism; fatty acid biosynthesis. Functionally, necessary for the introduction of cis unsaturation into fatty acids. Catalyzes the dehydration of (3R)-3-hydroxydecanoyl-ACP to E-(2)-decenoyl-ACP and then its isomerization to Z-(3)-decenoyl-ACP. Can catalyze the dehydratase reaction for beta-hydroxyacyl-ACPs with saturated chain lengths up to 16:0, being most active on intermediate chain length. The protein is 3-hydroxydecanoyl-[acyl-carrier-protein] dehydratase of Bradyrhizobium sp. (strain ORS 278).